The following is a 156-amino-acid chain: Small ribosomal subunit protein uS7 (156 aa).

Belongs to the universal ribosomal protein uS7 family. As to quaternary structure, part of the 30S ribosomal subunit. Contacts proteins S9 and S11.

Its function is as follows. One of the primary rRNA binding proteins, it binds directly to 16S rRNA where it nucleates assembly of the head domain of the 30S subunit. Is located at the subunit interface close to the decoding center, probably blocks exit of the E-site tRNA. This Thermoanaerobacter pseudethanolicus (strain ATCC 33223 / 39E) (Clostridium thermohydrosulfuricum) protein is Small ribosomal subunit protein uS7.